Reading from the N-terminus, the 66-residue chain is Toxin Boma6b (66 aa).

Positions 2-64 (RDAYIAQNYN…VPIKVEGKCH (63 aa)) constitute an LCN-type CS-alpha/beta domain. 4 disulfides stabilise this stretch: Cys-12–Cys-63, Cys-16–Cys-36, Cys-22–Cys-46, and Cys-26–Cys-48.

This sequence belongs to the long (4 C-C) scorpion toxin superfamily. Sodium channel inhibitor family. Alpha subfamily. As to expression, expressed by the venom gland.

The protein localises to the secreted. Alpha toxins bind voltage-independently at site-3 of sodium channels (Nav) and inhibit the inactivation of the activated channels, thereby blocking neuronal transmission. The chain is Toxin Boma6b from Buthus occitanus mardochei (Moroccan scorpion).